The chain runs to 85 residues: MGGISIWQLLIIALIVVLLFGTKKLRSLGGDLGGAVKGFKNAMSSDEDKKALEDAEAAKSVQTAQTAQPTQQATEKKPESNKEQA.

Residues 1–21 (MGGISIWQLLIIALIVVLLFG) traverse the membrane as a helical segment. The tract at residues 43–85 (MSSDEDKKALEDAEAAKSVQTAQTAQPTQQATEKKPESNKEQA) is disordered. Basic and acidic residues predominate over residues 46–57 (DEDKKALEDAEA). Over residues 58-73 (AKSVQTAQTAQPTQQA) the composition is skewed to low complexity. Residues 74–85 (TEKKPESNKEQA) are compositionally biased toward basic and acidic residues.

It belongs to the TatA/E family. As to quaternary structure, the Tat system comprises two distinct complexes: a TatABC complex, containing multiple copies of TatA, TatB and TatC subunits, and a separate TatA complex, containing only TatA subunits. Substrates initially bind to the TatABC complex, which probably triggers association of the separate TatA complex to form the active translocon.

It is found in the cell inner membrane. Its function is as follows. Part of the twin-arginine translocation (Tat) system that transports large folded proteins containing a characteristic twin-arginine motif in their signal peptide across membranes. TatA could form the protein-conducting channel of the Tat system. The protein is Sec-independent protein translocase protein TatA of Shewanella sp. (strain ANA-3).